A 583-amino-acid chain; its full sequence is Exonuclease 3'-5' domain-containing protein 2 (583 aa).

Residues 1 to 11 are Mitochondrial intermembrane-facing; it reads MTRESAVATKR. Residues 12–29 traverse the membrane as a helical segment; sequence NWAILAAGVGLVYVLVRH. Over 30–583 the chain is Cytoplasmic; that stretch reads RHRLLCPLRR…AGLDAKIKET (554 aa). In terms of domain architecture, 3'-5' exonuclease spans 62 to 228; sequence TTQWVLNELK…AIYQKLCRDL (167 aa). A divalent metal cation-binding residues include aspartate 83, glutamate 85, and aspartate 213. Residues 266-281 show a composition bias toward polar residues; the sequence is GSGVTRSKGSTQSKSN. The disordered stretch occupies residues 266–286; that stretch reads GSGVTRSKGSTQSKSNKWVPK.

This sequence belongs to the EXD2 family. Homodimer. Mg(2+) serves as cofactor. The cofactor is Mn(2+).

It is found in the mitochondrion membrane. Functionally, 3'-5' exoribonuclease required for mitochondrial metabolism. The sequence is that of Exonuclease 3'-5' domain-containing protein 2 from Drosophila melanogaster (Fruit fly).